The sequence spans 327 residues: Biotin synthase (327 aa).

Positions 49-282 constitute a Radical SAM core domain; it reads FNKEKIDLCS…NKVIRLCGGR (234 aa). Positions 67, 71, and 74 each coordinate [4Fe-4S] cluster. Positions 110, 142, 201, and 277 each coordinate [2Fe-2S] cluster.

The protein belongs to the radical SAM superfamily. Biotin synthase family. In terms of assembly, homodimer. [4Fe-4S] cluster is required as a cofactor. It depends on [2Fe-2S] cluster as a cofactor.

The enzyme catalyses (4R,5S)-dethiobiotin + (sulfur carrier)-SH + 2 reduced [2Fe-2S]-[ferredoxin] + 2 S-adenosyl-L-methionine = (sulfur carrier)-H + biotin + 2 5'-deoxyadenosine + 2 L-methionine + 2 oxidized [2Fe-2S]-[ferredoxin]. It functions in the pathway cofactor biosynthesis; biotin biosynthesis; biotin from 7,8-diaminononanoate: step 2/2. Functionally, catalyzes the conversion of dethiobiotin (DTB) to biotin by the insertion of a sulfur atom into dethiobiotin via a radical-based mechanism. The chain is Biotin synthase from Methanococcus maripaludis (strain DSM 14266 / JCM 13030 / NBRC 101832 / S2 / LL).